A 437-amino-acid chain; its full sequence is GTPase Era, mitochondrial (437 aa).

The N-terminal 43 residues, 1-43 (MAAPSWRGARLVQSVLRVWQVGPHVARERVIPFSSLLGFQRRC), are a transit peptide targeting the mitochondrion. Residues 112–330 (RVLRVVLLGA…QYLLTQAQPG (219 aa)) form the Era-type G domain. Residues 120-127 (GAPNAGKS) form a G1 region. GTP is bound at residue 120 to 127 (GAPNAGKS). A G2 region spans residues 146–150 (HTTRC). The tract at residues 167 to 170 (DTPG) is G3. 167-171 (DTPGI) contributes to the GTP binding site. The residue at position 173 (Ser173) is a Phosphoserine. 236 to 239 (NKVD) lines the GTP pocket. Residues 236–239 (NKVD) are G4. Residues 271-290 (HSHPGTHCPSPAVKDPNTQS) form a disordered region. A G5 region spans residues 308–310 (LSA). The region spanning 360–437 (LPQEVPYNVQ…DIRLSVKLLK (78 aa)) is the KH type-2 domain.

The protein belongs to the TRAFAC class TrmE-Era-EngA-EngB-Septin-like GTPase superfamily. Era GTPase family.

Its subcellular location is the mitochondrion matrix. The protein localises to the mitochondrion inner membrane. Its function is as follows. Probable GTPase that plays a role in the mitochondrial ribosomal small subunit assembly. Specifically binds the 12S mitochondrial rRNA (12S mt-rRNA) to a 33 nucleotide section delineating the 3' terminal stem-loop region. May act as a chaperone that protects the 12S mt-rRNA on the 28S mitoribosomal subunit during ribosomal small subunit assembly. The chain is GTPase Era, mitochondrial (ERAL1) from Homo sapiens (Human).